The primary structure comprises 325 residues: NAD kinase (325 aa).

Asp-91 (proton acceptor) is an active-site residue. Residues Asp-91–Gly-92, His-96, Asn-165–Asp-166, His-176, His-193, Asp-195, and Thr-206–Ser-211 contribute to the NAD(+) site.

This sequence belongs to the NAD kinase family. Requires a divalent metal cation as cofactor.

It localises to the cytoplasm. It carries out the reaction NAD(+) + ATP = ADP + NADP(+) + H(+). Involved in the regulation of the intracellular balance of NAD and NADP, and is a key enzyme in the biosynthesis of NADP. Catalyzes specifically the phosphorylation on 2'-hydroxyl of the adenosine moiety of NAD to yield NADP. The sequence is that of NAD kinase from Psychrobacter arcticus (strain DSM 17307 / VKM B-2377 / 273-4).